We begin with the raw amino-acid sequence, 130 residues long: MAQVQYRGTGRRKDSVARVRLVPGTGKIVMNDKSVEDYIPFADIRKELLQPFEVTETTDQYDVLVNVNGGGFHGQAGATRHGIARALLEVDPDFRTPLKRAGLLTRDARMKERKKPGLKKARKASQFSKR.

Residues 105–130 form a disordered region; that stretch reads TRDARMKERKKPGLKKARKASQFSKR. Basic residues predominate over residues 111–130; sequence KERKKPGLKKARKASQFSKR.

The protein belongs to the universal ribosomal protein uS9 family.

This Lactiplantibacillus plantarum (strain ATCC BAA-793 / NCIMB 8826 / WCFS1) (Lactobacillus plantarum) protein is Small ribosomal subunit protein uS9.